The sequence spans 346 residues: MEKLARKQVQALTPYLSARRIGGSGDVWLNANESPFDNEYKFNFARLNRYSECQPPELINAYAAYAEVKPEQVLTSRGADEGIELLVRAFCEPNQDAILYCPPTYGMYSISAETIGVETKTVPLTSDWQLDLPAIEASLENVKVVFVCSPNNPTGNIVDRKDILSLLEMTKDRAIVVMDEAYIDFCMEKSTVDLLADYPHLAILRTLSKAFALAGLRCGFTLANEELINVLLKVIAPYPVPVPVAEIATQALSEAGLARMKYQMLDLSANRAYLQAGLMVLPGVTVYEGWGNYLLVKFTNGDAVFKAAWDHGIILRNSPIENCVRISVGNREECEKTLGFIRNQLI.

Position 209 is an N6-(pyridoxal phosphate)lysine (Lys209).

Belongs to the class-II pyridoxal-phosphate-dependent aminotransferase family. Histidinol-phosphate aminotransferase subfamily. In terms of assembly, homodimer. It depends on pyridoxal 5'-phosphate as a cofactor.

It carries out the reaction L-histidinol phosphate + 2-oxoglutarate = 3-(imidazol-4-yl)-2-oxopropyl phosphate + L-glutamate. The protein operates within amino-acid biosynthesis; L-histidine biosynthesis; L-histidine from 5-phospho-alpha-D-ribose 1-diphosphate: step 7/9. The sequence is that of Histidinol-phosphate aminotransferase from Aliivibrio fischeri (strain MJ11) (Vibrio fischeri).